The chain runs to 523 residues: 26S proteasome regulatory subunit RPN3 (523 aa).

At A2 the chain carries N-acetylalanine. The region spanning 270 to 450 (ARYFFYLSKI…GFIETTELLN (181 aa)) is the PCI domain. S454 is subject to Phosphoserine. Over residues 480 to 495 (RYPEDKKTQQNEKSEN) the composition is skewed to basic and acidic residues. The interval 480 to 523 (RYPEDKKTQQNEKSENGENDDDTLDGDLMDDMSDISDLDDLGFL) is disordered. A compositionally biased stretch (acidic residues) spans 496–523 (GENDDDTLDGDLMDDMSDISDLDDLGFL).

This sequence belongs to the proteasome subunit S3 family. The 26S proteasome is composed of a core protease, known as the 20S proteasome, capped at one or both ends by the 19S regulatory complex (RC). The RC is composed of at least 18 different subunits in two subcomplexes, the base and the lid, which form the portions proximal and distal to the 20S proteolytic core, respectively. In terms of processing, N-acetylated by NAT1.

Acts as a regulatory subunit of the 26S proteasome which is involved in the ATP-dependent degradation of ubiquitinated proteins. This is 26S proteasome regulatory subunit RPN3 (RPN3) from Saccharomyces cerevisiae (strain ATCC 204508 / S288c) (Baker's yeast).